Consider the following 494-residue polypeptide: Cytochrome P450 2C44 (494 aa).

The N-terminal stretch at 1-25 is a signal peptide; that stretch reads MELLGLPTLALLVLVMSLSLLSVWT. S131 is modified (phosphoserine). N6-acetyllysine is present on residues K253 and K379. Residue C439 participates in heme binding.

The protein belongs to the cytochrome P450 family. It depends on heme as a cofactor. In terms of tissue distribution, highly expressed in liver, particularly in hepatocytes and bile duct epithelial cells (at protein level). Expressed in nephron segments. Prominent expression is detected in proximal tubules at the corticomedullary junction (at protein level). Also expressed in renal cortical collecting duct. Lower expression levels are detected in adrenal glands.

Its subcellular location is the endoplasmic reticulum membrane. It is found in the microsome membrane. The enzyme catalyses (5Z,8Z,11Z,14Z)-eicosatetraenoate + reduced [NADPH--hemoprotein reductase] + O2 = (8R,9S)-epoxy-(5Z,11Z,14Z)-eicosatrienoate + oxidized [NADPH--hemoprotein reductase] + H2O + H(+). It catalyses the reaction (5Z,8Z,11Z,14Z)-eicosatetraenoate + reduced [NADPH--hemoprotein reductase] + O2 = (11R,12S)-epoxy-(5Z,8Z,14Z)-eicosatrienoate + oxidized [NADPH--hemoprotein reductase] + H2O + H(+). The catalysed reaction is (5Z,8Z,11Z,14Z)-eicosatetraenoate + reduced [NADPH--hemoprotein reductase] + O2 = 14,15-epoxy-(5Z,8Z,11Z)-eicosatrienoate + oxidized [NADPH--hemoprotein reductase] + H2O + H(+). It carries out the reaction (5Z,8Z,11Z,14Z,17Z)-eicosapentaenoate + reduced [NADPH--hemoprotein reductase] + O2 = 8,9-epoxy-(5Z,11Z,14Z,17Z)-eicosatetraenoate + oxidized [NADPH--hemoprotein reductase] + H2O + H(+). The enzyme catalyses (5Z,8Z,11Z,14Z,17Z)-eicosapentaenoate + reduced [NADPH--hemoprotein reductase] + O2 = 11,12-epoxy-(5Z,8Z,14Z,17Z)-eicosatetraenoate + oxidized [NADPH--hemoprotein reductase] + H2O + H(+). It catalyses the reaction (5Z,8Z,11Z,14Z,17Z)-eicosapentaenoate + reduced [NADPH--hemoprotein reductase] + O2 = 14,15-epoxy-(5Z,8Z,11Z,17Z)-eicosatetraenoate + oxidized [NADPH--hemoprotein reductase] + H2O + H(+). The catalysed reaction is (5Z,8Z,11Z,14Z,17Z)-eicosapentaenoate + reduced [NADPH--hemoprotein reductase] + O2 = (17R,18S)-epoxy-(5Z,8Z,11Z,14Z)-eicosatetraenoate + oxidized [NADPH--hemoprotein reductase] + H2O + H(+). It carries out the reaction (5Z,8Z,11Z,14Z,17Z)-eicosapentaenoate + reduced [NADPH--hemoprotein reductase] + O2 = (17S,18R)-epoxy-(5Z,8Z,11Z,14Z)-eicosatetraenoate + oxidized [NADPH--hemoprotein reductase] + H2O + H(+). The enzyme catalyses 20-hydroxy-(5Z,8Z,11Z,14Z)-eicosatetraenoate + reduced [NADPH--hemoprotein reductase] + O2 = 20-hydroxy-8,9-epoxy-(5Z,11Z,14Z)-eicosatrienoate + oxidized [NADPH--hemoprotein reductase] + H2O + H(+). It participates in lipid metabolism; arachidonate metabolism. Functionally, a cytochrome P450 monooxygenase involved in polyunsaturated fatty acids (PUFAs) metabolism and signaling. Catalyzes preferentially the epoxidation of double bonds of PUFAs. Converts arachidonic acid (ARA, C20:4(n-6)) primarily to stereospecific products 8R,9S-epoxyeicosatrienoate (EET) and 11R,12S-EET. Plays a major role in the formation of EETs and hydroxy-EETs (HEETs) in kidney. Via EETs may inhibit the epithelial sodium channels (ENaCs) in nephron segments, preventing excessive sodium absorption during high dietary salt intake. Participates in the formation of anti-inflammatory hydroxyepoxyeicosatrienoic acids (HEETs) by converting 20-hydroxyeicosatetraenoic acid (20-HETE) to 20,8,9-HEET, an activator of PPARA. Metabolizes eicosapentaenoic acid (EPA, C20:5(n-3)) to epoxyeicosatetraenoic acid (EETeTr) regioisomers, 8,9-, 11,12-, 14,15-, and 17,18- EETeTr, preferentially producing 17R,18S enantiomer. Mechanistically, uses molecular oxygen inserting one oxygen atom into a substrate, and reducing the second into a water molecule, with two electrons provided by NADPH via cytochrome P450 reductase (CPR; NADPH-ferrihemoprotein reductase). The chain is Cytochrome P450 2C44 from Mus musculus (Mouse).